Here is a 441-residue protein sequence, read N- to C-terminus: C-terminal-binding protein 1 (441 aa).

Residues 1 to 70 (MGSSHLLNKG…EIHEKVLNEA (70 aa)) are interaction with GLIS2 1. NAD(+)-binding positions include S100, 180–185 (IGLGRV), D204, 237–243 (CGLNEHN), 264–266 (TAR), and D290. R266 is a catalytic residue. Positions 288 to 360 (ALDVHESEPF…VNKDHLTAAT (73 aa)) are interaction with GLIS2 2. The active site involves E295. S300 is subject to Phosphoserine. H315 serves as the catalytic Proton donor. Position 315-318 (315-318 (HAAW)) interacts with NAD(+). The interval 409 to 441 (SHGLPPVAHPPHAPSPGQTVKPEADRDHTSDQL) is disordered. Phosphoserine is present on S423. A Glycyl lysine isopeptide (Lys-Gly) (interchain with G-Cter in SUMO) cross-link involves residue K429. Positions 430–441 (PEADRDHTSDQL) are enriched in basic and acidic residues.

It belongs to the D-isomer specific 2-hydroxyacid dehydrogenase family. Homo- or heterodimer. Heterodimer with CTBP2. Interacts with ELK3 (via its PXDLS motif). Interacts with RBBP8 (via its PXDLS motif). Interacts with PNN, MECOM and ZFHX1B. Interacts with ZNF366 (via PXDLS motif). Interaction with SATB1 (non-acetylated form); the interaction stabilizes its attachment to DNA and promotes transcription repression. Interacts with PRDM16; the interaction represses white adipose tissue (WAT)-specific genes expression. Interacts with GLIS2, HIPK2, FOXP1, FOXP2, HDAC4, HDAC5, HDAC9, NRIP1, WIZ and ZNF217. Interacts with BCL6; the interaction is required for BCL6 transcriptional autoinhibition and inhibition of some BCL6 target genes. Interacts with IKZF4. Interacts with MCRIP1 (unphosphorylated form, via the PXDLS motif); competitively inhibiting CTBP-ZEB1 interaction. Interacts with Bassoon/BSN; this interaction targets and anchors CTBP1 to presynapses. Interacts with SIMC1. The cofactor is NAD(+). Post-translationally, ADP-ribosylated; when cells are exposed to brefeldin A. In terms of processing, the level of phosphorylation appears to be regulated during the cell cycle. Phosphorylation by HIPK2 on Ser-423 induces proteasomal degradation. Sumoylation on Lys-429 is promoted by the E3 SUMO-protein ligase CBX4. Expressed in a wide range of adult tissues.

Its subcellular location is the cytoplasm. The protein localises to the nucleus. Functionally, corepressor targeting diverse transcription regulators such as GLIS2 or BCL6. Has dehydrogenase activity. Involved in controlling the equilibrium between tubular and stacked structures in the Golgi complex. Functions in brown adipose tissue (BAT) differentiation. This chain is C-terminal-binding protein 1 (Ctbp1), found in Mus musculus (Mouse).